We begin with the raw amino-acid sequence, 575 residues long: Urease subunit alpha (575 aa).

Positions 138 to 575 (GAVDCHVHLI…LPMAQRYFLF (438 aa)) constitute a Urease domain. His-143, His-145, and Lys-226 together coordinate Ni(2+). Lys-226 is subject to N6-carboxylysine. His-228 contacts substrate. Ni(2+) contacts are provided by His-255 and His-281. The active-site Proton donor is His-329. Asp-369 is a Ni(2+) binding site.

The protein belongs to the metallo-dependent hydrolases superfamily. Urease alpha subunit family. In terms of assembly, heterotrimer of UreA (gamma), UreB (beta) and UreC (alpha) subunits. Three heterotrimers associate to form the active enzyme. It depends on Ni cation as a cofactor. In terms of processing, carboxylation allows a single lysine to coordinate two nickel ions.

The protein localises to the cytoplasm. The enzyme catalyses urea + 2 H2O + H(+) = hydrogencarbonate + 2 NH4(+). It functions in the pathway nitrogen metabolism; urea degradation; CO(2) and NH(3) from urea (urease route): step 1/1. This Frankia alni (strain DSM 45986 / CECT 9034 / ACN14a) protein is Urease subunit alpha.